The sequence spans 4885 residues: Centrosome-associated protein CEP530 (4885 aa).

The stretch at 1437–1528 (VAEYEAETRG…GREKDQLRSE (92 aa)) forms a coiled coil.

The protein localises to the cytoplasm. The protein resides in the cytoskeleton. Its subcellular location is the microtubule organizing center. It is found in the centrosome. In terms of biological role, required for proper nuclei segregation during the cell division. Plays a role in coordination of karyokinesis and cytokinesis during the tachyzoite cell cycle. This chain is Centrosome-associated protein CEP530, found in Toxoplasma gondii (strain ATCC 50611 / Me49).